A 427-amino-acid chain; its full sequence is Thymidine phosphorylase (427 aa).

Belongs to the thymidine/pyrimidine-nucleoside phosphorylase family. Homodimer.

The enzyme catalyses thymidine + phosphate = 2-deoxy-alpha-D-ribose 1-phosphate + thymine. In terms of biological role, the enzymes which catalyze the reversible phosphorolysis of pyrimidine nucleosides are involved in the degradation of these compounds and in their utilization as carbon and energy sources, or in the rescue of pyrimidine bases for nucleotide synthesis. The sequence is that of Thymidine phosphorylase (deoA) from Mycobacterium tuberculosis (strain CDC 1551 / Oshkosh).